Consider the following 480-residue polypeptide: Siroheme synthase 1 (480 aa).

The tract at residues 1 to 203 (MNYLPIFADL…GQLEQAEGEL (203 aa)) is precorrin-2 dehydrogenase /sirohydrochlorin ferrochelatase. NAD(+) is bound by residues 22–23 (EV) and 43–44 (LA). Ser128 is modified (phosphoserine). Residues 222 to 480 (GEVALVGAGP…DSRPAVVNLA (259 aa)) are uroporphyrinogen-III C-methyltransferase. Pro231 provides a ligand contact to S-adenosyl-L-methionine. Asp254 acts as the Proton acceptor in catalysis. Lys276 serves as the catalytic Proton donor. S-adenosyl-L-methionine contacts are provided by residues 307 to 309 (GGD), Ile312, 337 to 338 (TA), Met389, and Gly418.

The protein in the N-terminal section; belongs to the precorrin-2 dehydrogenase / sirohydrochlorin ferrochelatase family. In the C-terminal section; belongs to the precorrin methyltransferase family.

It catalyses the reaction uroporphyrinogen III + 2 S-adenosyl-L-methionine = precorrin-2 + 2 S-adenosyl-L-homocysteine + H(+). The enzyme catalyses precorrin-2 + NAD(+) = sirohydrochlorin + NADH + 2 H(+). The catalysed reaction is siroheme + 2 H(+) = sirohydrochlorin + Fe(2+). Its pathway is cofactor biosynthesis; adenosylcobalamin biosynthesis; precorrin-2 from uroporphyrinogen III: step 1/1. The protein operates within cofactor biosynthesis; adenosylcobalamin biosynthesis; sirohydrochlorin from precorrin-2: step 1/1. It functions in the pathway porphyrin-containing compound metabolism; siroheme biosynthesis; precorrin-2 from uroporphyrinogen III: step 1/1. It participates in porphyrin-containing compound metabolism; siroheme biosynthesis; siroheme from sirohydrochlorin: step 1/1. Its pathway is porphyrin-containing compound metabolism; siroheme biosynthesis; sirohydrochlorin from precorrin-2: step 1/1. Multifunctional enzyme that catalyzes the SAM-dependent methylations of uroporphyrinogen III at position C-2 and C-7 to form precorrin-2 via precorrin-1. Then it catalyzes the NAD-dependent ring dehydrogenation of precorrin-2 to yield sirohydrochlorin. Finally, it catalyzes the ferrochelation of sirohydrochlorin to yield siroheme. This Pectobacterium atrosepticum (strain SCRI 1043 / ATCC BAA-672) (Erwinia carotovora subsp. atroseptica) protein is Siroheme synthase 1.